A 123-amino-acid polypeptide reads, in one-letter code: Large ribosomal subunit protein bL12 (123 aa).

It belongs to the bacterial ribosomal protein bL12 family. As to quaternary structure, homodimer. Part of the ribosomal stalk of the 50S ribosomal subunit. Forms a multimeric L10(L12)X complex, where L10 forms an elongated spine to which 2 to 4 L12 dimers bind in a sequential fashion. Binds GTP-bound translation factors.

In terms of biological role, forms part of the ribosomal stalk which helps the ribosome interact with GTP-bound translation factors. Is thus essential for accurate translation. This chain is Large ribosomal subunit protein bL12, found in Laribacter hongkongensis (strain HLHK9).